A 160-amino-acid chain; its full sequence is 2-C-methyl-D-erythritol 2,4-cyclodiphosphate synthase (160 aa).

Aspartate 11 and histidine 13 together coordinate a divalent metal cation. Residues 11-13 (DIH) and 37-38 (HS) contribute to the 4-CDP-2-C-methyl-D-erythritol 2-phosphate site. Residue histidine 45 participates in a divalent metal cation binding. 4-CDP-2-C-methyl-D-erythritol 2-phosphate-binding positions include 59 to 61 (DIG), 135 to 138 (TTNE), and arginine 145.

The protein belongs to the IspF family. In terms of assembly, homotrimer. A divalent metal cation is required as a cofactor.

It carries out the reaction 4-CDP-2-C-methyl-D-erythritol 2-phosphate = 2-C-methyl-D-erythritol 2,4-cyclic diphosphate + CMP. The protein operates within isoprenoid biosynthesis; isopentenyl diphosphate biosynthesis via DXP pathway; isopentenyl diphosphate from 1-deoxy-D-xylulose 5-phosphate: step 4/6. Its function is as follows. Involved in the biosynthesis of isopentenyl diphosphate (IPP) and dimethylallyl diphosphate (DMAPP), two major building blocks of isoprenoid compounds. Catalyzes the conversion of 4-diphosphocytidyl-2-C-methyl-D-erythritol 2-phosphate (CDP-ME2P) to 2-C-methyl-D-erythritol 2,4-cyclodiphosphate (ME-CPP) with a corresponding release of cytidine 5-monophosphate (CMP). In Nostoc punctiforme (strain ATCC 29133 / PCC 73102), this protein is 2-C-methyl-D-erythritol 2,4-cyclodiphosphate synthase.